Here is a 136-residue protein sequence, read N- to C-terminus: MLSQIWILFTFMVCVIASKSKSDGLKFEITKKIPISKCKLKALPGDMVSVHYTGSLAENGKVFDSSLRRNEPIQFKLGAGQVIAGWEQGITGMCLGEKRTLHIPPELAYGSRGAGGVIPPNAVLDFDVELVDIARN.

The first 17 residues, 1 to 17, serve as a signal peptide directing secretion; the sequence is MLSQIWILFTFMVCVIA. The region spanning 45–134 is the PPIase FKBP-type domain; the sequence is GDMVSVHYTG…DFDVELVDIA (90 aa).

It belongs to the FKBP-type PPIase family. FKBP2 subfamily.

It localises to the endoplasmic reticulum. The catalysed reaction is [protein]-peptidylproline (omega=180) = [protein]-peptidylproline (omega=0). Inhibited by both FK506 and rapamycin. Functionally, PPIases accelerate the folding of proteins. It catalyzes the cis-trans isomerization of proline imidic peptide bonds in oligopeptides. This is FK506-binding protein 2 (FPR2) from Candida glabrata (strain ATCC 2001 / BCRC 20586 / JCM 3761 / NBRC 0622 / NRRL Y-65 / CBS 138) (Yeast).